The sequence spans 637 residues: Chaperone protein HtpG (637 aa).

The tract at residues 1–345 (MSQQETHGFQ…SNDLPLNVSR (345 aa)) is a; substrate-binding. The tract at residues 346 to 562 (EILQDNHITK…EGEMSTQMIK (217 aa)) is b. Positions 563-637 (LMQAAGQPVP…MNQMLLANMK (75 aa)) are c.

This sequence belongs to the heat shock protein 90 family. Homodimer.

It localises to the cytoplasm. Molecular chaperone. Has ATPase activity. This chain is Chaperone protein HtpG, found in Shewanella putrefaciens (strain CN-32 / ATCC BAA-453).